We begin with the raw amino-acid sequence, 2454 residues long: Probable serine/threonine-protein kinase DDB_G0277071 (2454 aa).

Residues 31 to 51 are compositionally biased toward low complexity; it reads TSSLTTTTTTTTTTTTTTSTT. Disordered stretches follow at residues 31 to 57, 206 to 265, 340 to 612, 963 to 1051, 1201 to 1330, and 1342 to 1528; these read TSSL…HESN, QQQL…QKQN, PRPP…LKIE, NNIN…NENE, SSDD…SNPL, and ISKG…SNNT. The stretch at 259–307 forms a coiled coil; it reads KQQQKQNSQQQQQQQQQQQQQQQQQQQQQQQQQQQQQQQQQQQKLNIHE. 2 stretches are compositionally biased toward low complexity: residues 346–399 and 406–428; these read QQHQ…NITP and PSSV…KPTS. A compositionally biased stretch (polar residues) spans 429–444; sequence IGQIQSLHYHNPSLYQ. 2 stretches are compositionally biased toward low complexity: residues 450 to 461 and 475 to 536; these read NRNRGNNNNNNN and SSTV…NTPN. The segment covering 553–568 has biased composition (gly residues); it reads GGIGGGGGGGSGGGGI. Composition is skewed to low complexity over residues 963–1048, 1201–1248, 1275–1284, 1299–1324, and 1346–1403; these read NNIN…TTTN, SSDD…TGGP, NSSNNNNTSS, SGSS…PTTG, and SPAS…SVST. Positions 1417 to 1441 are enriched in polar residues; it reads LNLSSVSKTGQASTSTPNLLNLKNI. A compositionally biased stretch (low complexity) spans 1442-1478; the sequence is PTTTNNSNSTTTTTTTTPTGKPQFSLNLSSLSKSSSS. Residues 1479–1491 are compositionally biased toward polar residues; it reads TETVPPSQPNQPI. The segment covering 1509–1528 has biased composition (low complexity); that stretch reads STTTTTTTTTPPPINNSNNT. A Protein kinase domain is found at 1730 to 2034; it reads FKDLKRVAKG…TKFIAIKPTI (305 aa). ATP-binding positions include 1736–1744 and K1760; that span reads VAKGAYGTV. Residue D1858 is the Proton acceptor of the active site. Residues 2130–2271 form the Tyrosine-protein phosphatase domain; it reads RPSKVASFMY…LCRWGKQRRN (142 aa). The segment at 2379 to 2404 is disordered; the sequence is NINNNNNNNSNNSKSKQQQQQQQNQN.

The protein belongs to the protein kinase superfamily. Ser/Thr protein kinase family.

The catalysed reaction is L-seryl-[protein] + ATP = O-phospho-L-seryl-[protein] + ADP + H(+). The enzyme catalyses L-threonyl-[protein] + ATP = O-phospho-L-threonyl-[protein] + ADP + H(+). The chain is Probable serine/threonine-protein kinase DDB_G0277071 from Dictyostelium discoideum (Social amoeba).